The primary structure comprises 139 residues: Putative pre-16S rRNA nuclease (139 aa).

The protein belongs to the YqgF nuclease family.

The protein resides in the cytoplasm. In terms of biological role, could be a nuclease involved in processing of the 5'-end of pre-16S rRNA. The chain is Putative pre-16S rRNA nuclease from Thermoanaerobacter pseudethanolicus (strain ATCC 33223 / 39E) (Clostridium thermohydrosulfuricum).